We begin with the raw amino-acid sequence, 124 residues long: Predicted GPI-anchored protein 11 (124 aa).

The first 18 residues, 1–18, serve as a signal peptide directing secretion; that stretch reads MKFQFVTALALASTMAVA. The segment at 38-59 is disordered; that stretch reads REGGSTGAELQDNNQPTAGLFG. A lipid anchor (GPI-anchor amidated serine) is attached at serine 107. Positions 108–124 are cleaved as a propeptide — removed in mature form; it reads GAAGGVGNLFSGILGGL.

The protein resides in the cell membrane. This is Predicted GPI-anchored protein 11 (PGA11) from Candida albicans (strain SC5314 / ATCC MYA-2876) (Yeast).